The following is a 341-amino-acid chain: GDP-fucose transporter 1 (341 aa).

The next 10 helical transmembrane spans lie at 17-37 (LVIG…LAIT), 41-61 (YPGL…YLLG), 71-91 (FTWD…LAIF), 103-123 (DTFI…DTVF), 132-152 (LTFL…ATDS), 156-176 (LTAY…MVYI), 187-207 (IWGL…VFWF), 231-251 (AFSS…FGFA), 260-280 (AFTV…VLIW), and 283-303 (HATP…VGYQ). A disordered region spans residues 316-341 (SEKDSEKGEEDEELTQLVPGKLASVV).

This sequence belongs to the nucleotide-sugar transporter family. GDP-Mannose:GMP antiporter (GMA) (TC 2.A.7.13) subfamily. In terms of tissue distribution, ubiquitous.

It is found in the golgi apparatus membrane. Functionally, acts as the major nucleotide-sugar transporter for the import of GDP-Fucose into the Golgi lumen. Transports GDP-Fucose in a strict counter-exchange mode. Is required for proper plant growth and development. Also acts as a GDP-mannose transporter that may be involved in the import of GDP-mannose from the cytoplasm into the Golgi lumen. This Arabidopsis thaliana (Mouse-ear cress) protein is GDP-fucose transporter 1.